Reading from the N-terminus, the 142-residue chain is Ig heavy chain V region IR2 (142 aa).

The signal sequence occupies residues 1–19 (MDLRLTYVFIVAILKGVLC). One can recognise an Ig-like domain in the interval 20–133 (EVKLEESGGG…YSENWFVYWG (114 aa)).

This is Ig heavy chain V region IR2 from Rattus norvegicus (Rat).